A 158-amino-acid polypeptide reads, in one-letter code: Transcription elongation factor GreA (158 aa).

This sequence belongs to the GreA/GreB family.

Functionally, necessary for efficient RNA polymerase transcription elongation past template-encoded arresting sites. The arresting sites in DNA have the property of trapping a certain fraction of elongating RNA polymerases that pass through, resulting in locked ternary complexes. Cleavage of the nascent transcript by cleavage factors such as GreA or GreB allows the resumption of elongation from the new 3'terminus. GreA releases sequences of 2 to 3 nucleotides. This chain is Transcription elongation factor GreA, found in Pelobacter propionicus (strain DSM 2379 / NBRC 103807 / OttBd1).